The chain runs to 255 residues: uncharacterized protein (255 aa).

An N-terminal signal peptide occupies residues 1–23 (MKRLNKLVLYISFLILVISFTAG). Cys24 carries N-palmitoyl cysteine lipidation. Cys24 is lipidated: S-diacylglycerol cysteine.

The protein belongs to the staphylococcal tandem lipoprotein family.

It localises to the cell membrane. This is an uncharacterized protein from Staphylococcus aureus (strain N315).